A 452-amino-acid polypeptide reads, in one-letter code: Phosphoglucosamine mutase (452 aa).

Serine 108 (phosphoserine intermediate) is an active-site residue. Serine 108, aspartate 247, aspartate 249, and aspartate 251 together coordinate Mg(2+). Serine 108 is subject to Phosphoserine.

It belongs to the phosphohexose mutase family. The cofactor is Mg(2+). Post-translationally, activated by phosphorylation.

It carries out the reaction alpha-D-glucosamine 1-phosphate = D-glucosamine 6-phosphate. Functionally, catalyzes the conversion of glucosamine-6-phosphate to glucosamine-1-phosphate. This Paraburkholderia phymatum (strain DSM 17167 / CIP 108236 / LMG 21445 / STM815) (Burkholderia phymatum) protein is Phosphoglucosamine mutase.